The sequence spans 471 residues: Putative ETHYLENE INSENSITIVE 3-like 4 protein (471 aa).

The disordered stretch occupies residues 280 to 316 (DLKISEDQDDQESSGSKRKSESMEPSKSVYTCQNSSC). Residues 304–316 (PSKSVYTCQNSSC) are compositionally biased toward polar residues.

It belongs to the EIN3 family.

The protein localises to the nucleus. In terms of biological role, putative transcription factor that may be involved in the ethylene response pathway. This is Putative ETHYLENE INSENSITIVE 3-like 4 protein (EIL4) from Arabidopsis thaliana (Mouse-ear cress).